A 299-amino-acid polypeptide reads, in one-letter code: Taste receptor type 2 member 42 (299 aa).

The Extracellular portion of the chain corresponds to 1-7; sequence MATELDK. A helical membrane pass occupies residues 8-28; the sequence is IFLILAIAEFIISMLGNVFIG. Topologically, residues 29–50 are cytoplasmic; sequence LVNCSEGIKNQKVFSSDFILTS. The helical transmembrane segment at 51–71 threads the bilayer; the sequence is LAISTIGQLLVILFDSFLVGL. Topologically, residues 72 to 101 are extracellular; the sequence is ASHLYTTYRLGKPVIMLWHMTNHLTTWLAT. The chain crosses the membrane as a helical span at residues 102–122; that stretch reads CLSVFYFFKIAHFPHSLFLWL. Topologically, residues 123-127 are cytoplasmic; that stretch reads RWRMN. A helical membrane pass occupies residues 128–148; it reads GMIAMLLILSLFLLIFDSSVL. Residues 149-187 lie on the Extracellular side of the membrane; it reads EIFIDISLNIIDKSSLTLYLDESKTLYDKLSILKTLLSL. Residues 188–208 traverse the membrane as a helical segment; sequence TSFIPFSLSLTSVLFLYLSLV. The Cytoplasmic portion of the chain corresponds to 209-238; the sequence is RHTRNLKLSSLGSRDSSTEAHRRAMKMVMS. Residues 239–259 form a helical membrane-spanning segment; the sequence is FLFLFIVHFFSLQVANWIFFM. Over 260–265 the chain is Extracellular; it reads LWNNKY. The helical transmembrane segment at 266 to 286 threads the bilayer; that stretch reads IKFVMLALNAFPSCHSFILIL. At 287-299 the chain is on the cytoplasmic side; the sequence is GNSKLRQTAVRLL.

Belongs to the G-protein coupled receptor T2R family.

The protein localises to the membrane. Receptor that may play a role in the perception of bitterness and is gustducin-linked. May play a role in sensing the chemical composition of the gastrointestinal content. The activity of this receptor may stimulate alpha gustducin, mediate PLC-beta-2 activation and lead to the gating of TRPM5. The chain is Taste receptor type 2 member 42 (TAS2R42) from Gorilla gorilla gorilla (Western lowland gorilla).